The chain runs to 749 residues: RNA-binding protein 5-B (749 aa).

A disordered region spans residues 1 to 88 (MGSDKRVSRS…YHSDGDYMDH (88 aa)). The RRM 1 domain occupies 102–182 (KTIMLRGLPI…KTIAMHYSNP (81 aa)). The RanBP2-type zinc-finger motif lies at 185-214 (KFEDWLCNKCGLYNFRRRLKCFRCGAAKAE). Residues 241 to 325 (SAIILRNIGP…KTIGVDFAKS (85 aa)) enclose the RRM 2 domain. Disordered regions lie at residues 425–471 (QMYQ…SVPD), 520–558 (PAADGTGQSGAQPNGANPGTSKEGKEKKEKPKSKTAQQI), 570–595 (NKQKENFKNSFQPLSSRDEERKESAA), and 626–680 (TEEE…NSNI). The span at 429–460 (QPGSPTQSGTSTAASTTPASTTSTEEATTPTA) shows a compositional bias: low complexity. Basic and acidic residues-rich tracts occupy residues 585 to 594 (SRDEERKESA) and 627 to 648 (EEEKPPNAKYRDRAAERREKYG). The G-patch domain occupies 677-723 (NSNIGNKMLQAMGWKEGSGLGRKSQGITAPIQAQVRMRGAGLGAKGS).

It belongs to the RBM5/RBM10 family. In terms of assembly, component of the spliceosome A complex (also known as the prespliceosome). Appears to dissociate from the spliceosome upon formation of the spliceosome B complex (also known as the precatalytic spliceosome), in which the heterotrimeric U4/U6.U5 snRNPs are bound.

Its subcellular location is the nucleus. In terms of biological role, component of the spliceosome A complex. Regulates alternative splicing of a number of mRNAs. May modulate splice site pairing after recruitment of the U1 and U2 snRNPs to the 5' and 3' splice sites of the intron. In Xenopus laevis (African clawed frog), this protein is RNA-binding protein 5-B (rbm5-b).